Here is a 248-residue protein sequence, read N- to C-terminus: Sugar fermentation stimulation protein homolog (248 aa).

The protein belongs to the SfsA family.

This chain is Sugar fermentation stimulation protein homolog, found in Prochlorococcus marinus subsp. pastoris (strain CCMP1986 / NIES-2087 / MED4).